An 80-amino-acid polypeptide reads, in one-letter code: Protein UL148A (80 aa).

Residues 10 to 30 (WIPVCVVVVMTSVVLFAGLHV) traverse the membrane as a helical segment.

It is found in the host membrane. In terms of biological role, plays a role in the down-regulation of the host NKG2D ligand MICA by utilizing the lysosomal pathway for its degradation. In turn, MICA reduction diminishes NK-cell killing of HCMV-infected cells. The chain is Protein UL148A (UL148A) from Human cytomegalovirus (strain Merlin) (HHV-5).